Consider the following 214-residue polypeptide: 3-isopropylmalate dehydratase small subunit (214 aa).

Belongs to the LeuD family. LeuD type 1 subfamily. Heterodimer of LeuC and LeuD.

It carries out the reaction (2R,3S)-3-isopropylmalate = (2S)-2-isopropylmalate. It functions in the pathway amino-acid biosynthesis; L-leucine biosynthesis; L-leucine from 3-methyl-2-oxobutanoate: step 2/4. Catalyzes the isomerization between 2-isopropylmalate and 3-isopropylmalate, via the formation of 2-isopropylmaleate. The sequence is that of 3-isopropylmalate dehydratase small subunit from Desulforapulum autotrophicum (strain ATCC 43914 / DSM 3382 / VKM B-1955 / HRM2) (Desulfobacterium autotrophicum).